We begin with the raw amino-acid sequence, 203 residues long: Putative 3-methyladenine DNA glycosylase (203 aa).

Belongs to the DNA glycosylase MPG family.

The chain is Putative 3-methyladenine DNA glycosylase from Clostridium botulinum (strain Loch Maree / Type A3).